The chain runs to 1020 residues: X-linked retinitis pigmentosa GTPase regulator (1020 aa).

RCC1 repeat units lie at residues 54-105 (NKLY…STEG), 106-158 (GNVY…LTED), 159-208 (GRLF…VTTD), 209-261 (GELY…LTEN), 262-313 (AVYT…ITDI), and 314-367 (GLMY…FAAP). Phosphoserine occurs at positions 418 and 518. Disordered stretches follow at residues 609–776 (HENN…IISK), 790–906 (EIPE…KEKA), and 989–1020 (DNKD…CTIL). Basic and acidic residues-rich tracts occupy residues 618–636 (LDAK…QKES), 644–665 (EKET…EKST), 685–698 (EENK…ESCK), 704–715 (DSERESVEKPDS), 760–771 (KLIEQGNEKETK), 790–802 (EIPE…EDSK), 816–853 (ENVK…LKLE), and 883–906 (SKTE…KEKA). Residues 996-1009 (NHMSQNHQNIPPTN) are compositionally biased toward polar residues. Position 1017 is a cysteine methyl ester (cysteine 1017). A lipid anchor (S-geranylgeranyl cysteine) is attached at cysteine 1017. A propeptide spans 1018–1020 (TIL) (removed in mature form).

In terms of assembly, interacts with SPATA7. Interacts with CEP290. Interacts with WHRN. Interacts with PDE6D. Interacts with RPGRIP1. Interacts with RPGRIP1L. PDE6D, RPGRIP1 and RPGRIP1L may compete for the same binding sites. Interacts with RAB37 and RAB8A (in GDP-bound forms); functions as GEF for RAB37 and RAB8A. Isoform 6 interacts with NPM1 (via C-terminus). Isoform 6 interacts with SMC1A and SMC3. In terms of processing, prenylated. Heart, brain, placenta, lung, liver, muscle, kidney, retina, pancreas and fetal retinal pigment epithelium. Isoform 3 is found only in the retina. Colocalizes with RPGRIP1 in the outer segment of rod photoreceptors and cone outer segments.

Its subcellular location is the cytoplasm. It localises to the cytoskeleton. It is found in the flagellum axoneme. The protein resides in the golgi apparatus. The protein localises to the cell projection. Its subcellular location is the cilium. It localises to the microtubule organizing center. It is found in the centrosome. The protein resides in the cilium basal body. The protein localises to the cilium axoneme. In terms of biological role, acts as a guanine-nucleotide releasing factor (GEF) for RAB8A and RAB37 by promoting the conversion of inactive RAB-GDP to the active form RAB-GTP. GEF activity towards RAB8A may facilitate ciliary trafficking by modulating ciliary intracellular localization of RAB8A. GEF activity towards RAB37 maintains autophagic homeostasis and retinal function. Involved in photoreceptor integrity. May control cilia formation by regulating actin stress filaments and cell contractility. May be involved in microtubule organization and regulation of transport in primary cilia. May play a critical role in spermatogenesis and in intraflagellar transport processes. In Homo sapiens (Human), this protein is X-linked retinitis pigmentosa GTPase regulator.